The sequence spans 141 residues: Galactose-6-phosphate isomerase subunit LacA 1 (141 aa).

It belongs to the LacAB/RpiB family. Heteromultimeric protein consisting of LacA and LacB.

It carries out the reaction aldehydo-D-galactose 6-phosphate = keto-D-tagatose 6-phosphate. It participates in carbohydrate metabolism; D-galactose 6-phosphate degradation; D-tagatose 6-phosphate from D-galactose 6-phosphate: step 1/1. This Streptococcus pyogenes serotype M6 (strain ATCC BAA-946 / MGAS10394) protein is Galactose-6-phosphate isomerase subunit LacA 1.